The chain runs to 473 residues: Photosystem II CP43 reaction center protein (473 aa).

Residues 1–14 constitute a propeptide that is removed on maturation; the sequence is MKTLYSLRRFYPVE. Threonine 15 bears the N-acetylthreonine mark. Threonine 15 bears the Phosphothreonine mark. A run of 5 helical transmembrane segments spans residues 69–93, 134–155, 178–200, 255–275, and 291–312; these read LFEVAHFVPEKPMYEQGLILLPHLA, LLGPETLEESFPFFGYVWKDRN, KALYFGGVYDTWAPGGGDVRKIT, KPFAWARRALVWSGEAYLSYS, and WFNNTAYPSEFYGPTGPEASQA. Glutamate 367 lines the [CaMn4O5] cluster pocket. The chain crosses the membrane as a helical span at residues 447 to 471; that stretch reads RARAAAAGFEKGIDRDFEPVLSMTP.

This sequence belongs to the PsbB/PsbC family. PsbC subfamily. As to quaternary structure, PSII is composed of 1 copy each of membrane proteins PsbA, PsbB, PsbC, PsbD, PsbE, PsbF, PsbH, PsbI, PsbJ, PsbK, PsbL, PsbM, PsbT, PsbX, PsbY, PsbZ, Psb30/Ycf12, at least 3 peripheral proteins of the oxygen-evolving complex and a large number of cofactors. It forms dimeric complexes. It depends on Binds multiple chlorophylls and provides some of the ligands for the Ca-4Mn-5O cluster of the oxygen-evolving complex. It may also provide a ligand for a Cl- that is required for oxygen evolution. PSII binds additional chlorophylls, carotenoids and specific lipids. as a cofactor.

Its subcellular location is the plastid. The protein localises to the chloroplast thylakoid membrane. Its function is as follows. One of the components of the core complex of photosystem II (PSII). It binds chlorophyll and helps catalyze the primary light-induced photochemical processes of PSII. PSII is a light-driven water:plastoquinone oxidoreductase, using light energy to abstract electrons from H(2)O, generating O(2) and a proton gradient subsequently used for ATP formation. In Eucalyptus globulus subsp. globulus (Tasmanian blue gum), this protein is Photosystem II CP43 reaction center protein.